A 20-amino-acid chain; its full sequence is Agglutinin beta-3 chain (20 aa).

The protein belongs to the jacalin lectin family. In terms of assembly, tetramer of four alpha chains associated with two or four beta chains.

In terms of biological role, D-galactose-specific lectin, binds the T-antigen structure Gal-beta1,3-GalNAc (Thomsen-Friedenreich-antigen-specific lectin). Potent and selective stimulant of distinct T- and B-cell functions. Shows a unique ability to specifically recognize IgA-1 from human serum. The protein is Agglutinin beta-3 chain of Artocarpus integer (Jack fruit).